The following is a 540-amino-acid chain: Chaperonin GroEL (540 aa).

Residues threonine 29–proline 32, aspartate 86–threonine 90, glycine 413, asparagine 476–alanine 478, and aspartate 492 each bind ATP.

This sequence belongs to the chaperonin (HSP60) family. In terms of assembly, forms a cylinder of 14 subunits composed of two heptameric rings stacked back-to-back. Interacts with the co-chaperonin GroES.

The protein localises to the cytoplasm. It catalyses the reaction ATP + H2O + a folded polypeptide = ADP + phosphate + an unfolded polypeptide.. Its function is as follows. Together with its co-chaperonin GroES, plays an essential role in assisting protein folding. The GroEL-GroES system forms a nano-cage that allows encapsulation of the non-native substrate proteins and provides a physical environment optimized to promote and accelerate protein folding. In Streptococcus anginosus, this protein is Chaperonin GroEL.